A 129-amino-acid chain; its full sequence is Histone H2A.J (129 aa).

The disordered stretch occupies residues 1 to 22; sequence MSGRGKQGGKVRAKAKSRSSRA. Lys-6 and Lys-10 each carry N6-acetyllysine. The segment covering 7–19 has biased composition (basic residues); that stretch reads QGGKVRAKAKSRS. Residue Lys-10 is modified to N6-lactoyllysine; alternate. The residue at position 105 (Gln-105) is an N5-methylglutamine. Thr-121 is subject to Phosphothreonine; by DCAF1.

It belongs to the histone H2A family. As to quaternary structure, the nucleosome is a histone octamer containing two molecules each of H2A, H2B, H3 and H4 assembled in one H3-H4 heterotetramer and two H2A-H2B heterodimers. The octamer wraps approximately 147 bp of DNA. Post-translationally, monoubiquitination of Lys-120 (H2AXK119ub) gives a specific tag for epigenetic transcriptional repression. Following DNA double-strand breaks (DSBs), it is ubiquitinated through 'Lys-63' linkage of ubiquitin moieties. Glutamine methylation at Gln-105 (H2AQ104me) by FBL is specifically dedicated to polymerase I. It is present at 35S ribosomal DNA locus and impairs binding of the FACT complex. In terms of processing, phosphorylation on Ser-2 (H2AS1ph) is enhanced during mitosis. Phosphorylation on Ser-2 by RPS6KA5/MSK1 directly represses transcription. Acetylation of H3 inhibits Ser-2 phosphorylation by RPS6KA5/MSK1. Phosphorylation at Thr-121 (H2AT120ph) by DCAF1 is present in the regulatory region of many tumor suppresor genes and down-regulates their transcription.

The protein localises to the nucleus. It is found in the chromosome. Functionally, core component of nucleosome. Nucleosomes wrap and compact DNA into chromatin, limiting DNA accessibility to the cellular machineries which require DNA as a template. Histones thereby play a central role in transcription regulation, DNA repair, DNA replication and chromosomal stability. DNA accessibility is regulated via a complex set of post-translational modifications of histones, also called histone code, and nucleosome remodeling. The protein is Histone H2A.J of Macaca fascicularis (Crab-eating macaque).